A 314-amino-acid chain; its full sequence is Formimidoylglutamase (314 aa).

Mn(2+) contacts are provided by His-127, Asp-153, His-155, Asp-157, Asp-245, and Asp-247.

It belongs to the arginase family. It depends on Mn(2+) as a cofactor.

The catalysed reaction is N-formimidoyl-L-glutamate + H2O = formamide + L-glutamate. The protein operates within amino-acid degradation; L-histidine degradation into L-glutamate; L-glutamate from N-formimidoyl-L-glutamate (hydrolase route): step 1/1. In terms of biological role, catalyzes the conversion of N-formimidoyl-L-glutamate to L-glutamate and formamide. This chain is Formimidoylglutamase, found in Aeromonas hydrophila subsp. hydrophila (strain ATCC 7966 / DSM 30187 / BCRC 13018 / CCUG 14551 / JCM 1027 / KCTC 2358 / NCIMB 9240 / NCTC 8049).